The chain runs to 232 residues: uncharacterized protein (232 aa).

The chain crosses the membrane as a helical span at residues 209–229; the sequence is ATISTPALGYAYFLFTLTLVF.

The protein localises to the host membrane. This is an uncharacterized protein from Saccharolobus islandicus (Sulfolobus islandicus).